Reading from the N-terminus, the 315-residue chain is Acetyl-coenzyme A carboxylase carboxyl transferase subunit alpha (315 aa).

Residues 40–293 (LQDKSKTLTE…REELSSQLAM (254 aa)) form the CoA carboxyltransferase C-terminal domain.

It belongs to the AccA family. In terms of assembly, acetyl-CoA carboxylase is a heterohexamer composed of biotin carboxyl carrier protein (AccB), biotin carboxylase (AccC) and two subunits each of ACCase subunit alpha (AccA) and ACCase subunit beta (AccD).

The protein localises to the cytoplasm. The enzyme catalyses N(6)-carboxybiotinyl-L-lysyl-[protein] + acetyl-CoA = N(6)-biotinyl-L-lysyl-[protein] + malonyl-CoA. Its pathway is lipid metabolism; malonyl-CoA biosynthesis; malonyl-CoA from acetyl-CoA: step 1/1. Functionally, component of the acetyl coenzyme A carboxylase (ACC) complex. First, biotin carboxylase catalyzes the carboxylation of biotin on its carrier protein (BCCP) and then the CO(2) group is transferred by the carboxyltransferase to acetyl-CoA to form malonyl-CoA. The protein is Acetyl-coenzyme A carboxylase carboxyl transferase subunit alpha of Pseudomonas syringae pv. syringae (strain B728a).